The sequence spans 702 residues: Ferrioxamine B receptor (702 aa).

A signal peptide spans Met-1–Ala-30. In terms of domain architecture, TBDR plug spans Pro-55–Arg-168. Residues Asp-173–Phe-702 form the TBDR beta-barrel domain.

Belongs to the TonB-dependent receptor family.

The protein resides in the cell outer membrane. Its function is as follows. Ferrioxamine binding and uptake, in association with the TonB protein. In Salmonella typhimurium (strain LT2 / SGSC1412 / ATCC 700720), this protein is Ferrioxamine B receptor (foxA).